A 421-amino-acid polypeptide reads, in one-letter code: Protein OS-9 homolog (421 aa).

Positions 1-26 are cleaved as a signal peptide; sequence MWRWSTGVRTMLGYAMCFLALGSALT. Residues 99 to 220 enclose the MRH domain; it reads EEATVGKKLE…LVSIPSLCEL (122 aa). Trp-115 serves as a coordination point for a mannooligosaccharide derivative. Asn-125 is a glycosylation site (N-linked (GlcNAc...) asparagine). 2 disulfides stabilise this stretch: Cys-173–Cys-206 and Cys-188–Cys-218. Residues Arg-180, Glu-202, and Tyr-208 each contribute to the a mannooligosaccharide derivative site. N-linked (GlcNAc...) asparagine glycans are attached at residues Asn-271 and Asn-332. The segment covering 375 to 394 has biased composition (acidic residues); that stretch reads GNSEDYEQQAPEQLDEEEAE. The segment at 375–403 is disordered; that stretch reads GNSEDYEQQAPEQLDEEEAELTSQSDDPA.

This sequence belongs to the OS-9 family. In terms of assembly, interacts with missfolded ER lumenal proteins.

The protein localises to the endoplasmic reticulum membrane. Lectin involved in the quality control of the secretory pathway. As a member of the endoplasmic reticulum-associated degradation lumenal (ERAD-L) surveillance system, targets misfolded endoplasmic reticulum lumenal glycoproteins for degradation. This is Protein OS-9 homolog (YOS9) from Eremothecium gossypii (strain ATCC 10895 / CBS 109.51 / FGSC 9923 / NRRL Y-1056) (Yeast).